A 433-amino-acid chain; its full sequence is Homeobox protein Hox-D3 (433 aa).

3 disordered regions span residues 44–198, 258–280, and 401–433; these read STPH…SKRV, GILH…AAGH, and HHGP…LTHL. Positions 58–74 are enriched in polar residues; that stretch reads SLDSDYPSSACSIQSSA. Residues 97 to 106 are compositionally biased toward gly residues; sequence NSQGGGGGNQ. Pro residues predominate over residues 116–132; sequence PPQPPPPPPPTLPPSSP. Positions 146 to 159 are enriched in low complexity; it reads GGLSASSSSSTISK. Positions 161 to 166 match the Antp-type hexapeptide motif; it reads IFPWMK. Over residues 171–183 the composition is skewed to polar residues; the sequence is NSKQKNSCATSGE. Residues 195-254 constitute a DNA-binding region (homeobox); the sequence is SKRVRTAYTSAQLVELEKEFHFNRYLCRPRRVEMANLLNLTERQIKIWFQNRRMKYKKDQ.

Belongs to the Antp homeobox family. As to expression, detected in adult kidney, but not in other adult tissues tested.

It is found in the nucleus. Functionally, sequence-specific transcription factor which is part of a developmental regulatory system that provides cells with specific positional identities on the anterior-posterior axis. This Mus musculus (Mouse) protein is Homeobox protein Hox-D3 (Hoxd3).